Consider the following 123-residue polypeptide: uncharacterized protein (123 aa).

The N-terminal stretch at 1-20 is a signal peptide; sequence MSPLIVGTLIIILLSGLATA. Glycine 96 carries the GPI-anchor amidated glycine lipid modification. Residues 97 to 123 constitute a propeptide, removed in mature form; it reads SSPTTKRVIYIVMILLVLITLAVNLKH.

The protein localises to the cell membrane. This is an uncharacterized protein from Schizosaccharomyces pombe (strain 972 / ATCC 24843) (Fission yeast).